The following is a 305-amino-acid chain: HPr kinase/phosphorylase (305 aa).

Catalysis depends on residues His136 and Lys157. Gly151–Ser158 serves as a coordination point for ATP. Ser158 lines the Mg(2+) pocket. The Proton acceptor; for phosphorylation activity. Proton donor; for dephosphorylation activity role is filled by Asp175. The important for the catalytic mechanism of both phosphorylation and dephosphorylation stretch occupies residues Leu198 to Asp207. Residue Glu199 coordinates Mg(2+). Arg240 is a catalytic residue. The interval Pro261–Arg266 is important for the catalytic mechanism of dephosphorylation.

It belongs to the HPrK/P family. As to quaternary structure, homohexamer. Requires Mg(2+) as cofactor.

The enzyme catalyses [HPr protein]-L-serine + ATP = [HPr protein]-O-phospho-L-serine + ADP + H(+). The catalysed reaction is [HPr protein]-O-phospho-L-serine + phosphate + H(+) = [HPr protein]-L-serine + diphosphate. In terms of biological role, catalyzes the ATP- as well as the pyrophosphate-dependent phosphorylation of a specific serine residue in HPr, a phosphocarrier protein of the phosphoenolpyruvate-dependent sugar phosphotransferase system (PTS). HprK/P also catalyzes the pyrophosphate-producing, inorganic phosphate-dependent dephosphorylation (phosphorolysis) of seryl-phosphorylated HPr (P-Ser-HPr). The two antagonistic activities of HprK/P are regulated by several intracellular metabolites, which change their concentration in response to the absence or presence of rapidly metabolisable carbon sources (glucose, fructose, etc.) in the growth medium. Therefore, by controlling the phosphorylation state of HPr, HPrK/P is a sensor enzyme that plays a major role in the regulation of carbon metabolism and sugar transport: it mediates carbon catabolite repression (CCR), and regulates PTS-catalyzed carbohydrate uptake and inducer exclusion. The polypeptide is HPr kinase/phosphorylase (Clostridium tetani (strain Massachusetts / E88)).